A 107-amino-acid chain; its full sequence is UPF0145 protein MAB_3451c (107 aa).

This sequence belongs to the UPF0145 family.

The protein is UPF0145 protein MAB_3451c of Mycobacteroides abscessus (strain ATCC 19977 / DSM 44196 / CCUG 20993 / CIP 104536 / JCM 13569 / NCTC 13031 / TMC 1543 / L948) (Mycobacterium abscessus).